Here is a 496-residue protein sequence, read N- to C-terminus: DNA-dependent metalloprotease SPRTN (496 aa).

Residue M1 is modified to N-acetylmethionine. In terms of domain architecture, SprT-like spans 45–212 (LQALFLQFND…KTCGGTYIKI (168 aa)). H111 lines the Zn(2+) pocket. The active site involves E112. Residues H115 and H130 each coordinate Zn(2+). K230 is subject to N6-acetyllysine. Positions 253–261 (FSGKGYVLG) match the SHP-box motif. The residue at position 268 (S268) is a Phosphoserine. Residue K303 forms a Glycyl lysine isopeptide (Lys-Gly) (interchain with G-Cter in SUMO2) linkage. Positions 326–333 (QSVLSSYF) match the PIP-box motif. K342 is covalently cross-linked (Glycyl lysine isopeptide (Lys-Gly) (interchain with G-Cter in SUMO2); alternate). Residue K342 forms a Glycyl lysine isopeptide (Lys-Gly) (interchain with G-Cter in ubiquitin); alternate linkage. The tract at residues 346–459 (NVNGSPVKSG…STPRSSGGQR (114 aa)) is disordered. Residue K361 forms a Glycyl lysine isopeptide (Lys-Gly) (interchain with G-Cter in SUMO2) linkage. A compositionally biased stretch (low complexity) spans 382–403 (SSKVTAPASATVTSAAGTSAAI). S383 is subject to Phosphoserine. A Nuclear localization signal motif is present at residues 412 to 423 (DQFLNKRPRLED). Composition is skewed to polar residues over residues 426-437 (ALNNIKEQTQSG) and 445-457 (RPTA…SSGG). A Glycyl lysine isopeptide (Lys-Gly) (interchain with G-Cter in SUMO2) cross-link involves residue K431. A UBZ4-type zinc finger spans residues 461–488 (LVNCPVCQGVVLESQINEHLDRCLEGSK). Residues C464, C467, H479, and C483 each contribute to the Zn(2+) site.

It belongs to the Spartan family. Homodimer. Interacts (VIA PIP-box) with PCNA (when ubiquitinated). Interacts (via its SHP-box) with VCP/p97. Interacts with RAD18. Interacts with KCTD13 and POLD3. It depends on Zn(2+) as a cofactor. Post-translationally, autocatalytically cleaved in response to double-stranded DNA-binding: autocatalytic cleavage takes place in trans and leads to inactivation. In terms of processing, monoubiquitinated; monoubiquitination promotes exclusion from chromatin. Deubiquitinated by VCPIP1: deubiquitination is required for subsequent acetylation and recruitment to chromatin and DNA damage sites. Acetylated following deubiquitination by VCPIP1, leading to recruitment to chromatin and DNA damage sites. Post-translationally, phosphorylation by CHEK1 promotes recruitment to chromatin.

The protein resides in the nucleus. Its subcellular location is the chromosome. With respect to regulation, DNA-binding activates the protease activity: single-stranded DNA-binding specifically activates ability to cleave covalent DNA-protein cross-links (DPCs). In contrast, double-stranded DNA-binding specifically activates autocatalytic cleavage, and subsequent inactivation. In terms of biological role, DNA-dependent metalloendopeptidase that mediates the proteolytic cleavage of covalent DNA-protein cross-links (DPCs) during DNA synthesis, thereby playing a key role in maintaining genomic integrity. DPCs are highly toxic DNA lesions that interfere with essential chromatin transactions, such as replication and transcription, and which are induced by reactive agents, such as UV light or formaldehyde. Associates with the DNA replication machinery and specifically removes DPCs during DNA synthesis. Catalyzes proteolytic cleavage of the HMCES DNA-protein cross-link following unfolding by the BRIP1/FANCJ helicase. Acts as a pleiotropic protease for DNA-binding proteins cross-linked with DNA, such as TOP1, TOP2A, histones H3 and H4. Mediates degradation of DPCs that are not ubiquitinated, while it is not able to degrade ubiquitinated DPCs. SPRTN activation requires polymerase collision with DPCs followed by helicase bypass of DPCs. Involved in recruitment of VCP/p97 to sites of DNA damage. Also acts as an activator of CHEK1 during normal DNA replication by mediating proteolytic cleavage of CHEK1, thereby promoting CHEK1 removal from chromatin and subsequent activation. Does not activate CHEK1 in response to DNA damage. May also act as a 'reader' of ubiquitinated PCNA: recruited to sites of UV damage and interacts with ubiquitinated PCNA and RAD18, the E3 ubiquitin ligase that monoubiquitinates PCNA. Facilitates chromatin association of RAD18 and is required for efficient PCNA monoubiquitination, promoting a feed-forward loop to enhance PCNA ubiquitination and translesion DNA synthesis. The chain is DNA-dependent metalloprotease SPRTN from Rattus norvegicus (Rat).